The sequence spans 309 residues: Porphobilinogen deaminase (309 aa).

Cys234 is modified (S-(dipyrrolylmethanemethyl)cysteine).

The protein belongs to the HMBS family. Monomer. The cofactor is dipyrromethane.

It catalyses the reaction 4 porphobilinogen + H2O = hydroxymethylbilane + 4 NH4(+). Its pathway is porphyrin-containing compound metabolism; protoporphyrin-IX biosynthesis; coproporphyrinogen-III from 5-aminolevulinate: step 2/4. In terms of biological role, tetrapolymerization of the monopyrrole PBG into the hydroxymethylbilane pre-uroporphyrinogen in several discrete steps. In Mycobacterium bovis (strain ATCC BAA-935 / AF2122/97), this protein is Porphobilinogen deaminase (hemC).